A 616-amino-acid chain; its full sequence is FNIP repeat-containing protein DDB_G0290639 (616 aa).

Positions Phe-239–Lys-274 form a coiled coil. A compositionally biased stretch (low complexity) spans Asn-241–Asn-269. A disordered region spans residues Asn-241 to Lys-270. FNIP repeat units follow at residues Phe-337–Gly-379, Phe-380–Asn-421, Phe-423–Asp-464, Phe-466–Gly-508, Phe-509–Ser-550, and Phe-552–Lys-593.

The polypeptide is FNIP repeat-containing protein DDB_G0290639 (Dictyostelium discoideum (Social amoeba)).